We begin with the raw amino-acid sequence, 257 residues long: Undecaprenyl-diphosphatase (257 aa).

8 consecutive transmembrane segments (helical) span residues 4 to 24, 41 to 61, 74 to 94, 103 to 123, 133 to 153, 173 to 193, 209 to 229, and 236 to 256; these read LIRV…PISS, SVTL…VVFW, VIGL…TIKT, PLLA…LGRL, LGLG…LPGI, SVTF…VLAI, VLSI…KWLI, and RLHW…LLNL.

It belongs to the UppP family.

The protein resides in the cell inner membrane. The enzyme catalyses di-trans,octa-cis-undecaprenyl diphosphate + H2O = di-trans,octa-cis-undecaprenyl phosphate + phosphate + H(+). Catalyzes the dephosphorylation of undecaprenyl diphosphate (UPP). Confers resistance to bacitracin. The protein is Undecaprenyl-diphosphatase of Rhodopirellula baltica (strain DSM 10527 / NCIMB 13988 / SH1).